The sequence spans 691 residues: CREB-regulated transcription coactivator 2 (691 aa).

Polar residues predominate over residues 1-20 (MATSGANGPGSATASASNPR). The interval 1–30 (MATSGANGPGSATASASNPRKFSEKIALQK) is disordered. N-acetylalanine is present on alanine 2. An Asymmetric dimethylarginine; by PRMT6 modification is found at arginine 51. Serine 70, serine 86, and serine 90 each carry phosphoserine. Asymmetric dimethylarginine; by PRMT6 occurs at positions 99, 120, and 123. Serine 136 carries the post-translational modification Phosphoserine. 2 positions are modified to asymmetric dimethylarginine; by PRMT6: arginine 161 and arginine 168. A Phosphothreonine modification is found at threonine 169. Serine 171 is modified (phosphoserine; by AMPK, MARK2, SIK1 and SIK2). The segment covering 174-186 (ALHTSVMNPNPQD) has biased composition (polar residues). The segment at 174–195 (ALHTSVMNPNPQDTYPGPTPPS) is disordered. At threonine 192 the chain carries Phosphothreonine. Residue lysine 234 forms a Glycyl lysine isopeptide (Lys-Gly) (interchain with G-Cter in SUMO2) linkage. A Nuclear export signal motif is present at residues 271–287 (TGGSLPDLTNLHFPPPL). Position 274 is a phosphoserine; by MARK2 (serine 274). 2 disordered regions span residues 280 to 306 (NLHF…GGNS) and 335 to 491 (HSPL…YSPP). Phosphoserine occurs at positions 306, 368, 393, 433, and 456. 2 stretches are compositionally biased toward low complexity: residues 335-383 (HSPL…HALP) and 390-411 (PSLS…SPVL). Polar residues predominate over residues 447-468 (SQQQLPKQFSPTMSPTLSSITQ). Tyrosine 488 bears the Phosphotyrosine mark. Phosphoserine is present on residues serine 489 and serine 492. Phosphothreonine is present on threonine 501. The disordered stretch occupies residues 513-543 (CLVQPSGGQPPGRQPHYGTLYPPGSSGHGQQ). A phosphoserine mark is found at serine 611, serine 621, and serine 622.

Belongs to the TORC family. In terms of assembly, binds, as a tetramer, through its N-terminal region, with the bZIP domain of CREB1. 'Arg-314' in the bZIP domain of CREB1 is essential for this interaction. Interaction, via its C-terminal, with TAF4, enhances recruitment of TAF4 to CREB1. Interacts with SIK2. Interacts with 14-3-3 proteins, YWHAB and YWHAG. Interacts (probably when phosphorylated at Ser-171) with YWHAE. Interacts with calmodulin-dependent catalytic subunit PPP3CA/calcineurin A. Interaction with COP1 mediates nuclear export and degradation of CRTC2. Post-translationally, phosphorylation/dephosphorylation states of Ser-171 are required for regulating transduction of CREB activity. CRTCs/TORCs are inactive when phosphorylated, and active when dephosphorylated at this site. This primary site of phosphorylation, is regulated by cAMP and calcium levels and is dependent on the phosphorylation of SIKs (SIK1 and SIK2) by LKB1. Following adenylyl cyclase activation, dephosphorylated at Ser-171 by PPP3CA/calcineurin A resulting in CRTC2 dissociation from 14-3-3 proteins and PPP3CA. Both insulin and AMPK increase this phosphorylation of CRTC2 while glucagon suppresses it. Phosphorylation at Ser-274 by MARK2 is induced under low glucose conditions and dephosphorylated in response to glucose influx. Phosphorylation at Ser-274 promotes interaction with 14-3-3 proteins and translocation to the cytoplasm. Asymmetric dimethylation of arginine resisues by PRMT6 enhances the association of CRTC2 with CREB on the promoters of gluconeogenic genes.

It is found in the cytoplasm. The protein resides in the nucleus. Functionally, transcriptional coactivator for CREB1 which activates transcription through both consensus and variant cAMP response element (CRE) sites. Acts as a coactivator, in the SIK/TORC signaling pathway, being active when dephosphorylated and acts independently of CREB1 'Ser-133' phosphorylation. Enhances the interaction of CREB1 with TAF4. Regulates gluconeogenesis as a component of the LKB1/AMPK/TORC2 signaling pathway. Regulates the expression of specific genes such as the steroidogenic gene, StAR. Potent coactivator of PPARGC1A and inducer of mitochondrial biogenesis in muscle cells. The polypeptide is CREB-regulated transcription coactivator 2 (Crtc2) (Rattus norvegicus (Rat)).